The sequence spans 351 residues: Protein IQ-DOMAIN 27 (351 aa).

Positions 15 to 37 (KKSKDRSHVSGGDSVKGGDHSGD) are disordered. The tract at residues 98-114 (EERWAAVKIQKVFRGSL) is calmodulin-binding. IQ domains follow at residues 99–127 (ERWAAVKIQKVFRGSLARKALRALKGIVK) and 128–150 (LQALVRGYLVRKRAAAMLQSIQT). Positions 191-198 (DRRTKIVE) match the Nuclear localization signal motif. Positions 299-310 (SFKAKVRSHSAP) are enriched in basic residues. Positions 299–351 (SFKAKVRSHSAPRQRSERQRLSLDEVMASKSSVSGVSMSHQHPPRHSCSCDPL) are disordered. Residues 312 to 321 (QRSERQRLSL) show a composition bias toward basic and acidic residues. Low complexity predominate over residues 324–337 (VMASKSSVSGVSMS).

The protein belongs to the IQD family. Binds to multiple calmodulin (CaM) in the presence of Ca(2+) and CaM-like proteins.

It is found in the nucleus. The protein resides in the nucleus envelope. Its subcellular location is the cytoplasm. It localises to the cytoskeleton. May be involved in cooperative interactions with calmodulins or calmodulin-like proteins. Recruits calmodulin proteins to microtubules, thus being a potential scaffold in cellular signaling and trafficking. May associate with nucleic acids and regulate gene expression at the transcriptional or post-transcriptional level. The polypeptide is Protein IQ-DOMAIN 27 (Arabidopsis thaliana (Mouse-ear cress)).